The chain runs to 242 residues: uncharacterized protein (242 aa).

NADP(+) is bound at residue 8 to 15 (TGASGGIG). Ser-137 is a substrate binding site. Catalysis depends on Tyr-150, which acts as the Proton acceptor.

Belongs to the short-chain dehydrogenases/reductases (SDR) family.

This is an uncharacterized protein from Bacillus subtilis (strain 168).